The sequence spans 512 residues: Pantetheinase (512 aa).

The signal sequence occupies residues 1–23; that stretch reads MGMSWWLACAAAFSALCVLKASS. Positions 32–308 constitute a CN hydrolase domain; sequence YEHAVILPKD…GKLLFAQLKS (277 aa). The active-site Proton acceptor is E81. Residues N132 and N148 are each glycosylated (N-linked (GlcNAc...) asparagine). The active-site Proton donor is the K180. C213 functions as the Nucleophile in the catalytic mechanism. N-linked (GlcNAc...) asparagine glycans are attached at residues N316 and N354. Residue N488 is the site of GPI-anchor amidated asparagine attachment. A propeptide spans 489–512 (removed in mature form); sequence ASSDFIAHSLIIMLIVTPIIHYLC.

The protein belongs to the carbon-nitrogen hydrolase superfamily. BTD/VNN family. Monomer. In terms of processing, N-glycosylated. As to expression, detected in kidney (at protein level). Ubiquitous.

It is found in the cell membrane. The enzyme catalyses (R)-pantetheine + H2O = cysteamine + (R)-pantothenate. Its function is as follows. Amidohydrolase that hydrolyzes specifically one of the carboamide linkages in D-pantetheine thus recycling pantothenic acid (vitamin B5) and releasing cysteamine. The protein is Pantetheinase (Vnn1) of Mus musculus (Mouse).